The chain runs to 314 residues: tRNA dimethylallyltransferase 1 (314 aa).

Position 8–15 (8–15 (GPTGSGKS)) interacts with ATP. Residue 10–15 (TGSGKS) coordinates substrate.

Belongs to the IPP transferase family. Monomer. Requires Mg(2+) as cofactor.

The enzyme catalyses adenosine(37) in tRNA + dimethylallyl diphosphate = N(6)-dimethylallyladenosine(37) in tRNA + diphosphate. Functionally, catalyzes the transfer of a dimethylallyl group onto the adenine at position 37 in tRNAs that read codons beginning with uridine, leading to the formation of N6-(dimethylallyl)adenosine (i(6)A). This chain is tRNA dimethylallyltransferase 1, found in Mycobacterium ulcerans (strain Agy99).